Reading from the N-terminus, the 220-residue chain is 2-hydroxy-3-keto-5-methylthiopentenyl-1-phosphate phosphatase (220 aa).

This sequence belongs to the HAD-like hydrolase superfamily. MtnX family.

It catalyses the reaction 2-hydroxy-5-methylsulfanyl-3-oxopent-1-enyl phosphate + H2O = 1,2-dihydroxy-5-(methylsulfanyl)pent-1-en-3-one + phosphate. It functions in the pathway amino-acid biosynthesis; L-methionine biosynthesis via salvage pathway; L-methionine from S-methyl-5-thio-alpha-D-ribose 1-phosphate: step 4/6. Its function is as follows. Dephosphorylates 2-hydroxy-3-keto-5-methylthiopentenyl-1-phosphate (HK-MTPenyl-1-P) yielding 1,2-dihydroxy-3-keto-5-methylthiopentene (DHK-MTPene). The sequence is that of 2-hydroxy-3-keto-5-methylthiopentenyl-1-phosphate phosphatase from Geobacillus kaustophilus (strain HTA426).